A 1535-amino-acid chain; its full sequence is Putative protein TIC 214 C-terminal part (1535 aa).

Disordered regions lie at residues 264 to 283 (ENQKKNGKQPVDTIKNNSND), 312 to 333 (EQQEEENPEESTGNPGIRSRKA), and 1263 to 1282 (DYKESDIQKPRTKAQSKNNK).

This sequence belongs to the TIC214 family. In terms of assembly, part of the Tic complex.

It localises to the plastid. It is found in the chloroplast. Functionally, involved in protein precursor import into chloroplasts. May be part of an intermediate translocation complex acting as a protein-conducting channel at the inner envelope. This is Putative protein TIC 214 C-terminal part from Piper cenocladum (Ant piper).